The sequence spans 353 residues: Photosystem II D2 protein (353 aa).

Thr2 carries the N-acetylthreonine modification. Thr2 bears the Phosphothreonine mark. Residues 41 to 61 (CAYFALGGWFTGTTFVTSWYT) form a helical membrane-spanning segment. His118 provides a ligand contact to chlorophyll a. Residues 125 to 141 (GFMLRQFELARPVQLRP) traverse the membrane as a helical segment. Residues Gln130 and Asn143 each coordinate pheophytin a. Residues 153-166 (VFLSVFLIYPLGQS) form a helical membrane-spanning segment. Residue His198 participates in chlorophyll a binding. The chain crosses the membrane as a helical span at residues 208–228 (AVLLCAIHGATVENTLFEDGD). Positions 215 and 262 each coordinate a plastoquinone. His215 contacts Fe cation. His269 is a Fe cation binding site. Residues 279–295 (GLWMSAIGVVGLALNLR) traverse the membrane as a helical segment.

Belongs to the reaction center PufL/M/PsbA/D family. In terms of assembly, PSII is composed of 1 copy each of membrane proteins PsbA, PsbB, PsbC, PsbD, PsbE, PsbF, PsbH, PsbI, PsbJ, PsbK, PsbL, PsbM, PsbT, PsbX, PsbY, PsbZ, Psb30/Ycf12, at least 3 peripheral proteins of the oxygen-evolving complex and a large number of cofactors. It forms dimeric complexes. It depends on The D1/D2 heterodimer binds P680, chlorophylls that are the primary electron donor of PSII, and subsequent electron acceptors. It shares a non-heme iron and each subunit binds pheophytin, quinone, additional chlorophylls, carotenoids and lipids. There is also a Cl(-1) ion associated with D1 and D2, which is required for oxygen evolution. The PSII complex binds additional chlorophylls, carotenoids and specific lipids. as a cofactor. In terms of processing, only phosphorylated in mesophyll cells, phosphorylation increases when cells are grown under high rather than low light regimes (70 vs 900 umol photons/m-2/s).

Its subcellular location is the plastid. It localises to the chloroplast thylakoid membrane. It catalyses the reaction 2 a plastoquinone + 4 hnu + 2 H2O = 2 a plastoquinol + O2. Its function is as follows. Photosystem II (PSII) is a light-driven water:plastoquinone oxidoreductase that uses light energy to abstract electrons from H(2)O, generating O(2) and a proton gradient subsequently used for ATP formation. It consists of a core antenna complex that captures photons, and an electron transfer chain that converts photonic excitation into a charge separation. The D1/D2 (PsbA/PsbD) reaction center heterodimer binds P680, the primary electron donor of PSII as well as several subsequent electron acceptors. D2 is needed for assembly of a stable PSII complex. In Zea mays (Maize), this protein is Photosystem II D2 protein.